Consider the following 631-residue polypeptide: ATP-dependent zinc metalloprotease FtsH (631 aa).

Residues 1 to 2 (MK) are Stromal-facing. The chain crosses the membrane as a helical span at residues 3–23 (ISWKNILLTLIPLGLISFLVW). The Lumenal portion of the chain corresponds to 24-118 (QGFNNTTNPQ…AHATNDSTPA (95 aa)). A helical membrane pass occupies residues 119-139 (WSLIGNLIFPILLIAGLAFLF). Residues 140 to 631 (RRSSNLPGGP…IDYKSQLKST (492 aa)) are Stromal-facing. ATP is bound at residue 213-220 (GPPGTGKT). His434 contributes to the Zn(2+) binding site. The active site involves Glu435. Zn(2+) is bound by residues His438 and Asp512.

In the central section; belongs to the AAA ATPase family. It in the C-terminal section; belongs to the peptidase M41 family. In terms of assembly, homohexamer. Requires Zn(2+) as cofactor.

Its subcellular location is the plastid. The protein localises to the chloroplast thylakoid membrane. Functionally, acts as a processive, ATP-dependent zinc metallopeptidase. The chain is ATP-dependent zinc metalloprotease FtsH from Guillardia theta (Cryptophyte).